A 512-amino-acid polypeptide reads, in one-letter code: Sodium-dependent phosphate transport protein 1, chloroplastic (512 aa).

A chloroplast-targeting transit peptide spans 1-59; sequence MNARALLCSSNIHSLYTSNRPPEKTSSSRSLRNLKPSPKSLRVWIYPRNRSSVFRVLVR. Helical transmembrane passes span 103-123, 141-161, 171-191, 192-212, 234-254, 257-277, 323-343, 361-381, 401-421, 453-473, and 486-506; these read WVIVLLCFSAFLLCNMDRVNM, VGLIQSSFFWGYLLTQIAGGI, VLGFGVIWWSIATILTPVAAK, LGLPYLLVVRAFMGVGEGVAM, LVYSGMYLGSVTGLAFSPFLI, FGWPSVFYSFGSLGTVWLTLW, VWALISCHFCHNWGTFILLTW, LLSVFPWMTMAISANAGGWIA, IGFLGPAFFLTQLKHIDSPTM, GVLLGLSNTAGVLAGVLGTAA, and VFTISVGLYLVGTVIWNLFST.

This sequence belongs to the major facilitator superfamily. Sodium/anion cotransporter (TC 2.A.1.14) family. Expressed in flower buds, sepals of mature flowers and mature leaves, less in senescent leaves and at low levels in roots.

It localises to the plastid. It is found in the chloroplast thylakoid membrane. Its function is as follows. Specific for inorganic phosphate transport across the thylakoid membrane in a sodium dependent manner. Binds glutamate but cannot transport it. May act as an ascorbate transporter at the thylakoid membrane. The sequence is that of Sodium-dependent phosphate transport protein 1, chloroplastic (ANTR1) from Arabidopsis thaliana (Mouse-ear cress).